A 660-amino-acid chain; its full sequence is Putative ABC transporter ATP-binding MG390 homolog (660 aa).

Positions 6–126 constitute a Peptidase C39 domain; the sequence is QEQPNECGIC…KQWTGYAATV (121 aa). C12 is an active-site residue. The next 6 membrane-spanning stretches (helical) occupy residues 150–170, 188–208, 265–285, 290–310, 379–399, and 402–422; these read LIIF…LLAT, IVVF…LYAL, HIPN…LIGI, FLWI…YDFF, SFAQ…GIIE, and YTLA…AYAT. The ABC transporter domain occupies 464–660; that stretch reads INLNNCSITL…INLSPYLQQT (197 aa). 494 to 501 is an ATP binding site; it reads GENGSGKS.

It belongs to the ABC transporter superfamily.

Its subcellular location is the cell membrane. This is Putative ABC transporter ATP-binding MG390 homolog from Mycoplasma pneumoniae (strain ATCC 29342 / M129 / Subtype 1) (Mycoplasmoides pneumoniae).